The sequence spans 448 residues: GTPase Der (448 aa).

2 consecutive EngA-type G domains span residues 2 to 171 (FTVV…PDTQ) and 181 to 364 (PKIA…EEYS). Residues 8–15 (GRPNVGKS), 58–62 (DTGGF), 123–126 (NKID), 187–194 (GRPNVGKS), 234–238 (DTAGI), and 305–308 (NKWD) contribute to the GTP site. In terms of domain architecture, KH-like spans 365 to 448 (KRVSTSELNR…PINIKIKQRK (84 aa)).

Belongs to the TRAFAC class TrmE-Era-EngA-EngB-Septin-like GTPase superfamily. EngA (Der) GTPase family. Associates with the 50S ribosomal subunit.

Its function is as follows. GTPase that plays an essential role in the late steps of ribosome biogenesis. The protein is GTPase Der of Thermodesulfovibrio yellowstonii (strain ATCC 51303 / DSM 11347 / YP87).